The sequence spans 406 residues: Serine/threonine transporter SstT (406 aa).

9 helical membrane passes run 15–35, 47–67, 81–101, 140–160, 191–211, 215–235, 289–309, 315–335, and 362–382; these read LVIQ…VSPS, FVGA…AASI, IIVM…VLSF, ALMS…GLAL, FGIF…ALAG, LLVV…PAMV, IPLG…TLTL, MGIE…AVSA, and IAMQ…SAET.

It belongs to the dicarboxylate/amino acid:cation symporter (DAACS) (TC 2.A.23) family.

Its subcellular location is the cell inner membrane. The catalysed reaction is L-serine(in) + Na(+)(in) = L-serine(out) + Na(+)(out). It catalyses the reaction L-threonine(in) + Na(+)(in) = L-threonine(out) + Na(+)(out). Its function is as follows. Involved in the import of serine and threonine into the cell, with the concomitant import of sodium (symport system). The polypeptide is Serine/threonine transporter SstT (Vibrio vulnificus (strain YJ016)).